A 460-amino-acid polypeptide reads, in one-letter code: ATP synthase subunit beta (460 aa).

Position 150–157 (150–157) interacts with ATP; the sequence is GGAGVGKT.

Belongs to the ATPase alpha/beta chains family. F-type ATPases have 2 components, CF(1) - the catalytic core - and CF(0) - the membrane proton channel. CF(1) has five subunits: alpha(3), beta(3), gamma(1), delta(1), epsilon(1). CF(0) has three main subunits: a(1), b(2) and c(9-12). The alpha and beta chains form an alternating ring which encloses part of the gamma chain. CF(1) is attached to CF(0) by a central stalk formed by the gamma and epsilon chains, while a peripheral stalk is formed by the delta and b chains.

It localises to the cell inner membrane. The enzyme catalyses ATP + H2O + 4 H(+)(in) = ADP + phosphate + 5 H(+)(out). Functionally, produces ATP from ADP in the presence of a proton gradient across the membrane. The catalytic sites are hosted primarily by the beta subunits. The polypeptide is ATP synthase subunit beta (Salmonella gallinarum (strain 287/91 / NCTC 13346)).